The primary structure comprises 389 residues: MLLALAQWLQGDASFLRLFTYLTFRAVMATITALVIGLVCGPWVIRKLTQMKVGQAVRKDGPQTHLVKSGTPTMGGVLILIGIAVATLLWGDLTNRFIWIVMLVTFGFGVIGWVDDYRKVVYKDPRGMSSREKYFWQSVIGLFAAVYLAFSVSEANNVRVFDLFMAWVRSGLSMGLPARADLMLPFLKSISYPLGVWGFIALTYFVIVGASNAVNLTDGLDGLVIMPVVLVGASLGVFAYVMGSAVYSKYLLFPHIPGAGELLIFCSAMGGAGLAFLWYNTHPAQVFMGDVGALALGGALGTVAVIVRQEIVLFIMGGIFVAETLSVMLQVTWFKYTKKRYGEGRRIFKMAPLHHHFELSGWKETQVVVRFWIITLMLCLFGLSTLKLR.

Transmembrane regions (helical) follow at residues 25-45, 73-93, 97-117, 135-155, 190-210, 222-242, 258-278, 286-306, 311-331, and 366-386; these read RAVM…PWVI, TMGG…WGDL, FIWI…VDDY, FWQS…VSEA, ISYP…IVGA, GLVI…AYVM, GAGE…AFLW, VFMG…VAVI, IVLF…MLQV, and QVVV…LSTL.

Belongs to the glycosyltransferase 4 family. MraY subfamily. Mg(2+) serves as cofactor.

The protein resides in the cell inner membrane. The enzyme catalyses UDP-N-acetyl-alpha-D-muramoyl-L-alanyl-gamma-D-glutamyl-meso-2,6-diaminopimeloyl-D-alanyl-D-alanine + di-trans,octa-cis-undecaprenyl phosphate = di-trans,octa-cis-undecaprenyl diphospho-N-acetyl-alpha-D-muramoyl-L-alanyl-D-glutamyl-meso-2,6-diaminopimeloyl-D-alanyl-D-alanine + UMP. It functions in the pathway cell wall biogenesis; peptidoglycan biosynthesis. Catalyzes the initial step of the lipid cycle reactions in the biosynthesis of the cell wall peptidoglycan: transfers peptidoglycan precursor phospho-MurNAc-pentapeptide from UDP-MurNAc-pentapeptide onto the lipid carrier undecaprenyl phosphate, yielding undecaprenyl-pyrophosphoryl-MurNAc-pentapeptide, known as lipid I. The sequence is that of Phospho-N-acetylmuramoyl-pentapeptide-transferase from Burkholderia mallei (strain NCTC 10247).